The primary structure comprises 258 residues: Imidazole glycerol phosphate synthase subunit HisF (258 aa).

Catalysis depends on residues Asp11 and Asp130.

This sequence belongs to the HisA/HisF family. As to quaternary structure, heterodimer of HisH and HisF.

Its subcellular location is the cytoplasm. It catalyses the reaction 5-[(5-phospho-1-deoxy-D-ribulos-1-ylimino)methylamino]-1-(5-phospho-beta-D-ribosyl)imidazole-4-carboxamide + L-glutamine = D-erythro-1-(imidazol-4-yl)glycerol 3-phosphate + 5-amino-1-(5-phospho-beta-D-ribosyl)imidazole-4-carboxamide + L-glutamate + H(+). It functions in the pathway amino-acid biosynthesis; L-histidine biosynthesis; L-histidine from 5-phospho-alpha-D-ribose 1-diphosphate: step 5/9. Its function is as follows. IGPS catalyzes the conversion of PRFAR and glutamine to IGP, AICAR and glutamate. The HisF subunit catalyzes the cyclization activity that produces IGP and AICAR from PRFAR using the ammonia provided by the HisH subunit. This chain is Imidazole glycerol phosphate synthase subunit HisF, found in Prochlorococcus marinus (strain MIT 9211).